Reading from the N-terminus, the 198-residue chain is Small ribosomal subunit protein uS4 (198 aa).

The 63-residue stretch at 90 to 152 (TRLDNLVLRA…SRSNELFKEN (63 aa)) folds into the S4 RNA-binding domain.

Belongs to the universal ribosomal protein uS4 family. Part of the 30S ribosomal subunit. Contacts protein S5. The interaction surface between S4 and S5 is involved in control of translational fidelity.

In terms of biological role, one of the primary rRNA binding proteins, it binds directly to 16S rRNA where it nucleates assembly of the body of the 30S subunit. Its function is as follows. With S5 and S12 plays an important role in translational accuracy. The polypeptide is Small ribosomal subunit protein uS4 (Finegoldia magna (strain ATCC 29328 / DSM 20472 / WAL 2508) (Peptostreptococcus magnus)).